The primary structure comprises 165 residues: Peptide methionine sulfoxide reductase MsrA (165 aa).

Residue Cys-11 is part of the active site.

Belongs to the MsrA Met sulfoxide reductase family.

The enzyme catalyses L-methionyl-[protein] + [thioredoxin]-disulfide + H2O = L-methionyl-(S)-S-oxide-[protein] + [thioredoxin]-dithiol. It catalyses the reaction [thioredoxin]-disulfide + L-methionine + H2O = L-methionine (S)-S-oxide + [thioredoxin]-dithiol. In terms of biological role, has an important function as a repair enzyme for proteins that have been inactivated by oxidation. Catalyzes the reversible oxidation-reduction of methionine sulfoxide in proteins to methionine. In Ureaplasma parvum serovar 3 (strain ATCC 27815 / 27 / NCTC 11736), this protein is Peptide methionine sulfoxide reductase MsrA.